The primary structure comprises 171 residues: MDYFTLFGLPASYHIDTQALSLRFQDLQRQYHPDKFANGTQAQHLAAVQQSATINQAWQTLRHPLTRAEYLLSLHGFDLASEQHTVRDTAFLMEQLTLREELDDIEQTKDDARLESFIKRVQKMFDTRLQQMVTQLDNAAWGEAADTVRKLRFLDKLRSSADQLEEKLLDF.

The J domain occupies 2–74 (DYFTLFGLPA…LTRAEYLLSL (73 aa)).

Belongs to the HscB family. As to quaternary structure, interacts with HscA and stimulates its ATPase activity. Interacts with IscU.

Co-chaperone involved in the maturation of iron-sulfur cluster-containing proteins. Seems to help targeting proteins to be folded toward HscA. This chain is Co-chaperone protein HscB, found in Salmonella arizonae (strain ATCC BAA-731 / CDC346-86 / RSK2980).